The following is a 189-amino-acid chain: Cancer/testis antigen family 45 member A2 (189 aa).

Belongs to the CT45 family. Testis specific. Expressed in cancer cell lines.

This is Cancer/testis antigen family 45 member A2 from Homo sapiens (Human).